A 225-amino-acid polypeptide reads, in one-letter code: UPF0758 protein BCE33L4198 (225 aa).

Residues 103 to 225 form the MPN domain; that stretch reads SIRNPEDCAR…FVSLKEKGHI (123 aa). 3 residues coordinate Zn(2+): His-174, His-176, and Asp-187. The short motif at 174 to 187 is the JAMM motif element; it reads HNHPSGDPAPSRED.

It belongs to the UPF0758 family.

This is UPF0758 protein BCE33L4198 from Bacillus cereus (strain ZK / E33L).